Consider the following 373-residue polypeptide: D-alanine--D-alanine ligase (373 aa).

The 208-residue stretch at 156–363 (KKLLAAEGLP…YPTLLAAMVD (208 aa)) folds into the ATP-grasp domain. 184–239 (RERLGLPVFVKPARGGSSIGVSRVTAWDELPAAVALARRHDPKVIVEAAVIGRELE) contacts ATP. Mg(2+)-binding residues include Asp318, Glu330, and Asn332.

It belongs to the D-alanine--D-alanine ligase family. Requires Mg(2+) as cofactor. Mn(2+) is required as a cofactor.

It localises to the cytoplasm. The enzyme catalyses 2 D-alanine + ATP = D-alanyl-D-alanine + ADP + phosphate + H(+). The protein operates within cell wall biogenesis; peptidoglycan biosynthesis. Cell wall formation. This Mycolicibacterium smegmatis (strain ATCC 700084 / mc(2)155) (Mycobacterium smegmatis) protein is D-alanine--D-alanine ligase.